A 93-amino-acid polypeptide reads, in one-letter code: Putative membrane protein insertion efficiency factor (93 aa).

Belongs to the UPF0161 family.

The protein localises to the cell inner membrane. Its function is as follows. Could be involved in insertion of integral membrane proteins into the membrane. This chain is Putative membrane protein insertion efficiency factor, found in Cupriavidus taiwanensis (strain DSM 17343 / BCRC 17206 / CCUG 44338 / CIP 107171 / LMG 19424 / R1) (Ralstonia taiwanensis (strain LMG 19424)).